The sequence spans 359 residues: RNA-binding protein 4B (359 aa).

RRM domains lie at 2-72 (VKLF…ASKN) and 78-148 (TKLH…LSTS). The CCHC-type zinc-finger motif lies at 160 to 177 (SGCYRCGKEGHWSKECPV). The segment at 196–359 (AVRTPYTMGY…YVDRARYSAF (164 aa)) is interaction with TNPO3.

In terms of assembly, interacts with TNPO3, which may mediate nuclear import of the protein. In terms of tissue distribution, expressed in liver and kidney (at protein level). Ubiquitously expressed.

The protein resides in the nucleus. The protein localises to the nucleolus. Functionally, required for the translational activation of PER1 mRNA in response to circadian clock. Binds directly to the 3'-UTR of the PER1 mRNA. The polypeptide is RNA-binding protein 4B (RBM4B) (Homo sapiens (Human)).